The following is a 420-amino-acid chain: ATP phosphoribosyltransferase regulatory subunit (420 aa).

It belongs to the class-II aminoacyl-tRNA synthetase family. HisZ subfamily. In terms of assembly, heteromultimer composed of HisG and HisZ subunits.

Its subcellular location is the cytoplasm. It functions in the pathway amino-acid biosynthesis; L-histidine biosynthesis; L-histidine from 5-phospho-alpha-D-ribose 1-diphosphate: step 1/9. Functionally, required for the first step of histidine biosynthesis. May allow the feedback regulation of ATP phosphoribosyltransferase activity by histidine. This is ATP phosphoribosyltransferase regulatory subunit from Bacillus cereus (strain ATCC 14579 / DSM 31 / CCUG 7414 / JCM 2152 / NBRC 15305 / NCIMB 9373 / NCTC 2599 / NRRL B-3711).